An 89-amino-acid polypeptide reads, in one-letter code: Small ribosomal subunit protein uS15 (89 aa).

The protein belongs to the universal ribosomal protein uS15 family. Part of the 30S ribosomal subunit. Forms a bridge to the 50S subunit in the 70S ribosome, contacting the 23S rRNA.

In terms of biological role, one of the primary rRNA binding proteins, it binds directly to 16S rRNA where it helps nucleate assembly of the platform of the 30S subunit by binding and bridging several RNA helices of the 16S rRNA. Forms an intersubunit bridge (bridge B4) with the 23S rRNA of the 50S subunit in the ribosome. The sequence is that of Small ribosomal subunit protein uS15 from Trichodesmium erythraeum (strain IMS101).